Consider the following 92-residue polypeptide: Small ribosomal subunit protein uS19 (92 aa).

The protein belongs to the universal ribosomal protein uS19 family.

Protein S19 forms a complex with S13 that binds strongly to the 16S ribosomal RNA. This is Small ribosomal subunit protein uS19 from Staphylococcus epidermidis (strain ATCC 35984 / DSM 28319 / BCRC 17069 / CCUG 31568 / BM 3577 / RP62A).